We begin with the raw amino-acid sequence, 107 residues long: CYFQNCPRGXXXAMSDLELRQCLPCGPGGKGRCFGPSICCGDELGCFMGTAEALRCQEENYLPSPCQSGQKPCGSGGRCAAAGICCNDESCVTEPECREGASFPRRA.

An intrachain disulfide couples C1 to C6. G9 carries the glycine amide modification. Cystine bridges form between C22/C66, C25/C39, C33/C56, C40/C46, C73/C85, C79/C97, and C86/C91.

The protein belongs to the vasopressin/oxytocin family. Interacts with vasopressin receptors V1bR/AVPR1B (Ki=85 pM), V1aR/AVPR1A (Ki=0.6 nM) and V2R/AVPR2 (Ki=4.9 nM). Interacts with oxytocin receptor (OXTR) (Ki=110 nM).

It is found in the secreted. In terms of biological role, neurophysin 2 specifically binds vasopressin. Its function is as follows. Vasopressin has a direct antidiuretic action on the kidney, it also causes vasoconstriction of the peripheral vessels. Acts by binding to vasopressin receptors (V1bR/AVPR1B, V1aR/AVPR1A, and V2R/AVPR2). This Balaenoptera physalus (Fin whale) protein is Vasopressin-neurophysin 2 (AVP).